The primary structure comprises 239 residues: tRNA (guanine-N(7)-)-methyltransferase (239 aa).

S-adenosyl-L-methionine is bound by residues glutamate 69, glutamate 94, aspartate 121, and aspartate 144. The active site involves aspartate 144. Substrate contacts are provided by residues lysine 148, aspartate 180, and 217–220 (TKFE).

This sequence belongs to the class I-like SAM-binding methyltransferase superfamily. TrmB family. Monomer.

It catalyses the reaction guanosine(46) in tRNA + S-adenosyl-L-methionine = N(7)-methylguanosine(46) in tRNA + S-adenosyl-L-homocysteine. It participates in tRNA modification; N(7)-methylguanine-tRNA biosynthesis. Catalyzes the formation of N(7)-methylguanine at position 46 (m7G46) in tRNA. In Buchnera aphidicola subsp. Acyrthosiphon pisum (strain Tuc7), this protein is tRNA (guanine-N(7)-)-methyltransferase.